The following is a 537-amino-acid chain: MAHCVTLVQLSVSCDHLIDKDIGSKSDPLCVLLQDVGGGNWTELGRTERVQNCSSPEFSKTLQLEYHFETVQKLRFGIYDIDNKTPELGDDDFLGGAECSLGQIVSSRMLTLPLMLKPGKPAGRGTITVSAQELKDNRVVTMEVEARNLDKKDFLGKSDPFLEFFRQGDGKWHLAYRSEVIKNNLNPTWKRFSVPLQHFCGGDASTPIQVRCSDYDSDGSHDLIGTFHTSLAQLQAAPAEFECIHPEKQQKKKSYKNSGTICVKMCQVETEHSFLDYVMGGCQINFTVGVDFTGSNGDPSSPDSLHYLSPTGVNEYLTALWSVGSVVQDYDSDKLFPAFGFGAQVPPDWQVSHEFALNFNPSNPFCAGIQGIVDAYRQALPQVRLFGPTNFAPIINHVARFAAQAANQRNASQYFVLLLLTDGAVTDVEATREAVVRASYLPMSVIIVGVGCADFEAMEQLDADGGPLHTRSGEAAARDIVQFVPYRRFQNAPREALAQTVLAEVPTQLVSYFRAQGWAPFKPPPPAAKGPAQAPQA.

C2 domains follow at residues 1–114 and 123–245; these read MAHC…TLPL and GRGT…ECIH. The Ca(2+) site is built by aspartate 21, aspartate 27, aspartate 80, aspartate 82, aspartate 92, aspartate 153, and aspartate 159. Lysine 171 carries the post-translational modification N6-acetyllysine. Aspartate 214, aspartate 216, and aspartate 222 together coordinate Ca(2+). The VWFA domain occupies 285–505; sequence NFTVGVDFTG…ALAQTVLAEV (221 aa).

This sequence belongs to the copine family. In terms of assembly, homodimer; homodimerizes via its C2 domains. Interacts with p65/RELA (via N-terminus); this interaction induces proteolytic cleavage of p65/RELA subunit and inhibition of NF-kappa-B transcriptional activity. Interacts (via VWFA domain) with ACTB, CCDC22, MYCBP2, PPP5C, RDX and UBE2O. It depends on Ca(2+) as a cofactor. As to expression, expressed in liver, spleen, muscle, testis, adrenal (at protein level).

It is found in the nucleus. Its subcellular location is the cytoplasm. The protein localises to the cell membrane. In terms of biological role, calcium-dependent phospholipid-binding protein that plays a role in calcium-mediated intracellular processes. Involved in the TNF-alpha receptor signaling pathway in a calcium-dependent manner. Exhibits calcium-dependent phospholipid binding properties. Plays a role in neuronal progenitor cell differentiation; induces neurite outgrowth via a AKT-dependent signaling cascade and calcium-independent manner. May recruit target proteins to the cell membrane in a calcium-dependent manner. May function in membrane trafficking. Involved in TNF-alpha-induced NF-kappa-B transcriptional repression by inducing endoprotease processing of the transcription factor NF-kappa-B p65/RELA subunit. Also induces endoprotease processing of NF-kappa-B p50/NFKB1, p52/NFKB2, RELB and REL. This Bos taurus (Bovine) protein is Copine-1.